Here is a 190-residue protein sequence, read N- to C-terminus: Elongation factor P-like protein (190 aa).

This sequence belongs to the elongation factor P family.

This Citrobacter koseri (strain ATCC BAA-895 / CDC 4225-83 / SGSC4696) protein is Elongation factor P-like protein.